A 336-amino-acid polypeptide reads, in one-letter code: tRNA N6-adenosine threonylcarbamoyltransferase (336 aa).

Fe cation is bound by residues His111, His115, and Tyr132. Substrate-binding positions include 132–136 (YLSGG), Asp164, Asp185, and Ser264. Asp292 lines the Fe cation pocket.

This sequence belongs to the KAE1 / TsaD family. Fe(2+) serves as cofactor.

The protein localises to the cytoplasm. The enzyme catalyses L-threonylcarbamoyladenylate + adenosine(37) in tRNA = N(6)-L-threonylcarbamoyladenosine(37) in tRNA + AMP + H(+). Its function is as follows. Required for the formation of a threonylcarbamoyl group on adenosine at position 37 (t(6)A37) in tRNAs that read codons beginning with adenine. Is probably involved in the transfer of the threonylcarbamoyl moiety of threonylcarbamoyl-AMP (TC-AMP) to the N6 group of A37. This Sulfurisphaera tokodaii (strain DSM 16993 / JCM 10545 / NBRC 100140 / 7) (Sulfolobus tokodaii) protein is tRNA N6-adenosine threonylcarbamoyltransferase.